The following is a 147-amino-acid chain: Small ribosomal subunit protein uS12 (147 aa).

It belongs to the universal ribosomal protein uS12 family. In terms of assembly, part of the 30S ribosomal subunit.

In terms of biological role, with S4 and S5 plays an important role in translational accuracy. Located at the interface of the 30S and 50S subunits. The chain is Small ribosomal subunit protein uS12 from Pyrobaculum islandicum (strain DSM 4184 / JCM 9189 / GEO3).